Consider the following 107-residue polypeptide: Ferredoxin (107 aa).

Positions 1–8 (MVSGVSRN) are excised as a propeptide. [2Fe-2S] cluster-binding residues include Cys-45, Cys-51, and Cys-54.

The cofactor is [2Fe-2S] cluster.

The protein localises to the hydrogenosome. Ferredoxins are iron-sulfur proteins that transfer electrons in a wide variety of metabolic reactions. This Psalteriomonas lanterna (Amoeboflagellate) protein is Ferredoxin.